Consider the following 532-residue polypeptide: Fe-S cluster assembly factor HCF101, chloroplastic (532 aa).

The N-terminal 61 residues, 1 to 61 (MPLLHPQSLR…RVSQNLSVAK (61 aa)), are a transit peptide targeting the chloroplast. An N-acetylalanine modification is found at Ala62. 184–191 (CKGGVGKS) is a binding site for ATP.

It belongs to the Mrp/NBP35 ATP-binding proteins family. [4Fe-4S] cluster serves as cofactor. Expressed in aerial tissues exposed to light. Very low expression in roots.

Its subcellular location is the plastid. It localises to the chloroplast stroma. Functionally, required for photosystem I (PSI) biosynthesis and assembly. May serve as a chloroplast scaffold protein that specifically assembles iron-sulfur (4Fe-4S) clusters and transfers them to the chloroplast PSI and ferredoxin-thioredoxin (FTR) complexes. Can assemble a 4Fe-4S cluster and transfer it to apoproteins in yeast cells. Probably not required for assembly or stability of plastidic 2Fe-2S clusters. The sequence is that of Fe-S cluster assembly factor HCF101, chloroplastic (HCF101) from Arabidopsis thaliana (Mouse-ear cress).